The chain runs to 166 residues: Salivary acidic proline-rich phosphoprotein 1/2 (166 aa).

A signal peptide spans 1–16 (MLLILLSVALLAFSSA). The disordered stretch occupies residues 16–166 (AQDLDEDVSQ…QGPPQGQSPQ (151 aa)). At Gln17 the chain carries Pyrrolidone carboxylic acid. The interval 17 to 46 (QDLDEDVSQEDVPLVISDGGDSEQFIDEER) is inhibits hydroxyapatite formation, binds to hydroxyapatite and calcium. Ser24 carries the phosphoserine; by FAM20C modification. A Phosphoserine; alternate modification is found at Ser33. 2 O-linked (GlcA) serine; alternate glycosylation sites follow: Ser33 and Ser38. At Ser38 the chain carries Phosphoserine; by FAM20C; alternate. Low complexity-rich tracts occupy residues 48–61 (GPPLGGQQSQPSAG) and 68–82 (GPQQGPPQQGGQQQQ). Pro residues-rich tracts occupy residues 83–111 (GPPPPQGKPQGPPQQGGHPPPPQGRPQGP) and 137–159 (GPPPPPPGKPQGPPPQGGRPQGP).

Proteolytically cleaved; PRP-2, PRP-1, PIF-S and Db-S yield PRP-4, PRP-3 (protein A), PIF-F and Db-F, respectively. Post-translationally, a hexuronic acid was shown to be linked to Ser-33 in about 40% of the polypeptides. Neither the structure of the carbohydrate (whether glucuronic acid or an isomer of), nor the linkage (whether a glycoside or an ester) has been definitely established.

It is found in the secreted. Functionally, PRP's act as highly potent inhibitors of crystal growth of calcium phosphates. They provide a protective and reparative environment for dental enamel which is important for the integrity of the teeth. This Homo sapiens (Human) protein is Salivary acidic proline-rich phosphoprotein 1/2 (PRH1).